The primary structure comprises 453 residues: Aldehyde dehydrogenase, dimeric NADP-preferring (453 aa).

Ser-2 carries the N-acetylserine modification. N6-acetyllysine is present on Lys-178. Residue 188 to 193 coordinates NAD(+); the sequence is GSTGVG. Residue Lys-194 is modified to N6-acetyllysine. Active-site residues include Glu-210 and Cys-244.

This sequence belongs to the aldehyde dehydrogenase family. In terms of assembly, homodimer. High levels in stomach, esophagus and lung; low level in the liver and kidney.

The protein resides in the cytoplasm. The catalysed reaction is an aldehyde + NAD(+) + H2O = a carboxylate + NADH + 2 H(+). It carries out the reaction octanal + NAD(+) + H2O = octanoate + NADH + 2 H(+). ALDHs play a major role in the detoxification of alcohol-derived acetaldehyde. They are involved in the metabolism of corticosteroids, biogenic amines, neurotransmitters, and lipid peroxidation. Oxidizes medium and long chain aldehydes into non-toxic fatty acids. Preferentially oxidizes aromatic aldehyde substrates. Comprises about 50 percent of corneal epithelial soluble proteins. May play a role in preventing corneal damage caused by ultraviolet light. In Homo sapiens (Human), this protein is Aldehyde dehydrogenase, dimeric NADP-preferring (ALDH3A1).